Reading from the N-terminus, the 102-residue chain is ATP-dependent Clp protease adapter protein ClpS (102 aa).

The protein belongs to the ClpS family. As to quaternary structure, binds to the N-terminal domain of the chaperone ClpA.

In terms of biological role, involved in the modulation of the specificity of the ClpAP-mediated ATP-dependent protein degradation. The polypeptide is ATP-dependent Clp protease adapter protein ClpS (Shewanella sediminis (strain HAW-EB3)).